Consider the following 474-residue polypeptide: Methylenetetrahydrofolate--tRNA-(uracil-5-)-methyltransferase TrmFO (474 aa).

13–18 (GGGLAG) is an FAD binding site.

It belongs to the MnmG family. TrmFO subfamily. FAD is required as a cofactor.

The protein resides in the cytoplasm. It catalyses the reaction uridine(54) in tRNA + (6R)-5,10-methylene-5,6,7,8-tetrahydrofolate + NADH + H(+) = 5-methyluridine(54) in tRNA + (6S)-5,6,7,8-tetrahydrofolate + NAD(+). The enzyme catalyses uridine(54) in tRNA + (6R)-5,10-methylene-5,6,7,8-tetrahydrofolate + NADPH + H(+) = 5-methyluridine(54) in tRNA + (6S)-5,6,7,8-tetrahydrofolate + NADP(+). Its function is as follows. Catalyzes the folate-dependent formation of 5-methyl-uridine at position 54 (M-5-U54) in all tRNAs. In Bartonella tribocorum (strain CIP 105476 / IBS 506), this protein is Methylenetetrahydrofolate--tRNA-(uracil-5-)-methyltransferase TrmFO.